A 285-amino-acid polypeptide reads, in one-letter code: Probable endonuclease 4 (285 aa).

Zn(2+)-binding residues include His69, His109, Glu145, Asp179, His182, His216, Asp229, His231, and Glu261.

Belongs to the AP endonuclease 2 family. Requires Zn(2+) as cofactor.

It carries out the reaction Endonucleolytic cleavage to 5'-phosphooligonucleotide end-products.. In terms of biological role, endonuclease IV plays a role in DNA repair. It cleaves phosphodiester bonds at apurinic or apyrimidinic (AP) sites, generating a 3'-hydroxyl group and a 5'-terminal sugar phosphate. In Shigella dysenteriae serotype 1 (strain Sd197), this protein is Probable endonuclease 4.